Consider the following 288-residue polypeptide: Beta-lactamase PSE-1 (288 aa).

The first 17 residues, 1 to 17, serve as a signal peptide directing secretion; that stretch reads MKFLLAFSLLIPSVVFA. Ser65 serves as the catalytic Acyl-ester intermediate. Cys72 and Cys118 form a disulfide bridge. 229–231 serves as a coordination point for substrate; sequence RSG.

This sequence belongs to the class-A beta-lactamase family. In terms of assembly, monomer.

It catalyses the reaction a beta-lactam + H2O = a substituted beta-amino acid. Inhibited by p-chloromercuribenzoate but not by cloxacillin. In terms of biological role, hydrolyzes penicillin, ampicillin and carbenicillin but not other antibiotics including oxacillin, methicillin and cloxacillin. The polypeptide is Beta-lactamase PSE-1 (Pseudomonas aeruginosa).